A 1500-amino-acid polypeptide reads, in one-letter code: MAPLWNGMAAGLLLSAAVVSGQANSRLGASPSYQGFSNICPEQCIVTGPEPSNWSTYNDMNRLANCNQAMLYGFNLYDDVDDADSYHRIFACTAYGNDWSDDSQSHVTNSRPEKEHKVNYEIGWSSYSPGTESDYRSLIRQMRDYVARGHISPSKTAMLYAQFGYTSAGIYIGNSLQSKDIGDVALQSLIDDSHDFDGRRDSLTMQLCGPHYDSQHVFGFMALRNGTFRAIQSAFKSWSNAECLDFEHSTNFTASTHFTSSMLSSIKAGNTTTSGIQAGGSALPAKLSTQHTKNLMSSTGECRTQKVQNGDSCAAIATRCGISGADFTKYNSEKSFCSKLKPGQHVCCSSGALPDFSPKPKEDGSCATTTVGDGESCSTIAAANSLTEKDIDGFNQKTWGWGGCKNIFKDSVICISKGSPPMPAEVSDAECGPQVPGTKLPKDMSKLADLNPCPLNACCNTFGHCGTTAEFCTDTNTGAPGTAKAGTNGCISHCGMDIVKGNAPTKFRSVGYYESYQFKRQCLYQDVMQVDHSKYTHLHFGFVDISSDYEISINDKSANYQFHNFKYISGPKRIVSFGGWDFSTQASTYQIFRQGTSAANRKKLATNIANFVKENNLDGVDIDWEYPSAPDIPGLPSGDKSEGNNYLEFLVVLKNLLGDKSVSIAAPGSYWYLKGFPIAKISKVIDYIVFMTYDLHGQWDAGNPNAQPGCDDGSCLRSHVNMTETKESLSLITKAGVDSGKVVVGVSSYGRSFRMVDADCDGPMCKFTGTRLHSNAEKADCTDTAGYISNAEINQLLDHNSSRVNKHYVDTHSNSNIMVYDNTNWVAYMSPEIRAERTKMYQSLGMGGTVNWATDLEKFNDAPEGVENWPGMILQMKSGTITPRGAGSRSGNWTKIGCDNEYSRETPYWSPMTRWRQLDAAGAWSDLIADWKNYRDKDHTGDKLSFSAQISYLLGGPDNVKCGQIDGDSNCPLISCKLFNIGNGTKSGAAAELIWDSFFKIHQMYAKFKSALVTDAALVIDNTLPHLENTFAPVPPPEDNAWLDMVLDFVSMGVPMVGGKFIDDFLKMIPAMTTKSDISLDHYKEVLSAILDSPATIATNLKGTSDPNDWTPEKQAEFSKYMGQSLQGWNYIFTKDLENLFDGTDKSIERLTIMISDGRMIDGIPKDIPYPDKTKRKDKDDDDNKKTEATDSEKKSVEDGFLTAFWAYSIPAVWQASGHHPFIIDTGRSCDDKDGDKYTKDLKSACYENRLYQLADPDGRSHPCDYDCGITGGCKCDDSAFSSLKGVEELDGKAWSGLKVEDIIIGSVRTYKQNGNENGGGTADPTDSGTFEALKQMDITTPGFMRLPVCSETLARTSWENADKTEATRNKDGFPCNNDNGRSYCTTSESTYIEETTSGSPLIDDCLVIVKNIEGTTGSWNKLIEIQYGIAHFGTCTFGIEGKGRHGNSNVYIGAQDIVDIIRYTSKHWGHGTDKMQGKGVMQCNGNIKQQELHWAIYKK.

Positions Met1–Ala23 are cleaved as a signal peptide. Asn53, Asn225, Asn251, and Asn270 each carry an N-linked (GlcNAc...) asparagine glycan. 2 consecutive LysM domains span residues Arg303–Cys348 and Ala367–Ile415. Positions Asp428–Met496 constitute a Chitin-binding type-1 domain. Disulfide bonds link Cys431–Cys459, Cys453–Cys465, Cys458–Cys472, and Cys490–Cys494. The 373-residue stretch at Phe507–Gly879 folds into the GH18 domain. The Proton donor role is filled by Glu625. Tyr626 is a chitin binding site. 2 N-linked (GlcNAc...) asparagine glycosylation sites follow: Asn721 and Asn800. Trp852 contributes to the chitin binding site. Residues Asn892 and Asn983 are each glycosylated (N-linked (GlcNAc...) asparagine). The interval Ile1164 to Glu1193 is disordered. The span at Pro1169–Glu1193 shows a compositional bias: basic and acidic residues.

The protein belongs to the glycosyl hydrolase 18 family. Chitinase class V subfamily.

Its subcellular location is the secreted. The catalysed reaction is Random endo-hydrolysis of N-acetyl-beta-D-glucosaminide (1-&gt;4)-beta-linkages in chitin and chitodextrins.. In terms of biological role, secreted chitinase involved in the degradation of chitin, a component of the cell walls of fungi and exoskeletal elements of some animals (including worms and arthropods). Involved in pathogenesis via manipulation of host defenses for successful infection. The protein is Secreted chitinase LysM12 of Penicillium expansum (Blue mold rot fungus).